The following is a 499-amino-acid chain: Zinc finger protein PLAG1 (499 aa).

The segment at 1 to 33 (MATVIPGDLSEVRDTQKAPSGKRKRGESKPRKN) is disordered. The interval 2-84 (ATVIPGDLSE…SKYKLQRHMA (83 aa)) is interaction with KPNA2. A Nuclear localization signal motif is present at residues 22-25 (KRKR). 7 C2H2-type zinc fingers span residues 34–56 (FPCQ…SFSH), 62–86 (YKCT…MATH), 92–114 (HKCN…LHTH), 121–143 (FKCE…LALH), 150–172 (LTCK…LKSH), 185–207 (HQCE…MVVH), and 213–236 (FLCQ…KKSH). The interval 41 to 242 (KAFNSVEKLK…KKSHNQELLK (202 aa)) is decreased nuclear import with localization in the nucleus but also in the cytoplasm. The tract at residues 243–383 (VKTEPVDFLD…SQASSSKLGL (141 aa)) is repression domain; contains 3 sumoylation motifs and massively decrease transcription activity. An activates transcription; Inhibition of nuclear import due to lack of NLS and KPNA2 interaction region spans residues 243–499 (VKTEPVDFLD…TLPRFHQAFQ (257 aa)). Glycyl lysine isopeptide (Lys-Gly) (interchain with G-Cter in SUMO) cross-links involve residues Lys-244 and Lys-263. The segment at 364–400 (QGGAPSSSQDSQASSSKLGLEPQSGSPDDGAGDLSLS) is disordered. The span at 369-379 (SSSQDSQASSS) shows a compositional bias: low complexity. Positions 384–499 (EPQSGSPDDG…TLPRFHQAFQ (116 aa)) are massively activates transcription.

This sequence belongs to the krueppel C2H2-type zinc-finger protein family. Interacts with KPNA2, which escorts protein to the nucleus via interaction with nuclear localization signal. Interacts with E3 SUMO-protein ligase PIAS1, PIAS2 and PIAS4. In terms of processing, sumoylated with SUMO1; which inhibits transcriptional activity, but does not affect nuclear localization. Blockers of sumoylation pathway such as SENP3 and inactive UBE2I increases transcriptional capacity. Sumoylation is increased in the presence of PIAS1. Acetylated by lysine acetyltransferase EP300; which activates transcriptional capacity. Lysine residues that are sumoylated also seem to be target for acetylation. As to expression, expressed in heart, spleen, lung, kidney, brain, testis and epididymis but not in salivary glands.

The protein localises to the nucleus. Functionally, transcription factor whose activation results in up-regulation of target genes, such as IGFII, leading to uncontrolled cell proliferation: when overexpressed in cultured cells, higher proliferation rate and transformation are observed. Other target genes such as CRLF1, CRABP2, CRIP2, PIGF are strongly induced in cells with PLAG1 induction. Proto-oncogene whose ectopic expression can trigger the development of pleomorphic adenomas of the salivary gland and lipoblastomas. Cooperates with CBFB-MYH11. In Rattus norvegicus (Rat), this protein is Zinc finger protein PLAG1 (Plag1).